We begin with the raw amino-acid sequence, 423 residues long: Acaloleptin A (423 aa).

Positions 1 to 17 are cleaved as a signal peptide; it reads MITKISLILFAVLLVSG. Residues 18 to 26 constitute a propeptide that is removed on maturation; that stretch reads LEEEERWKR. Disordered regions lie at residues 28–58, 108–128, 180–203, and 355–385; these read LQPG…NTKT, INNK…DNGN, NVNN…GNTR, and SDDE…TRAD. The segment covering 34-43 has biased composition (polar residues); it reads NVNNNDQPWQ. The span at 180–189 shows a compositional bias: polar residues; it reads NVNNKDQPWQ. Residues 357 to 366 show a composition bias toward acidic residues; that stretch reads DEDEEEEEDQ. The span at 376-385 shows a compositional bias: basic and acidic residues; sequence RGDDGNTRAD.

This sequence belongs to the coleoptericin family. Hemolymph (at protein level). Larval fat body.

It localises to the secreted. Its function is as follows. Acaloleptins A1-A4 show antibacterial activity against Gram-negative bacteria but not against Gram-positive bacteria. Acaloleptin A5 shows antibacterial activity against Gram-positive bacteria but not against Gram-negative bacteria, and may also have antifungal activity. In Acalolepta luxuriosa (Udo longhorn beetle), this protein is Acaloleptin A.